The chain runs to 312 residues: Ribosomal RNA small subunit methyltransferase H (312 aa).

Residues 33–35 (AGH), Asp52, Phe79, Asp100, and Gln107 each bind S-adenosyl-L-methionine.

This sequence belongs to the methyltransferase superfamily. RsmH family.

The protein resides in the cytoplasm. The enzyme catalyses cytidine(1402) in 16S rRNA + S-adenosyl-L-methionine = N(4)-methylcytidine(1402) in 16S rRNA + S-adenosyl-L-homocysteine + H(+). In terms of biological role, specifically methylates the N4 position of cytidine in position 1402 (C1402) of 16S rRNA. This Finegoldia magna (strain ATCC 29328 / DSM 20472 / WAL 2508) (Peptostreptococcus magnus) protein is Ribosomal RNA small subunit methyltransferase H.